We begin with the raw amino-acid sequence, 213 residues long: Putative 3-methyladenine DNA glycosylase (213 aa).

Belongs to the DNA glycosylase MPG family.

In Latilactobacillus sakei subsp. sakei (strain 23K) (Lactobacillus sakei subsp. sakei), this protein is Putative 3-methyladenine DNA glycosylase.